The following is an 81-amino-acid chain: Large ribosomal subunit protein bL27 (81 aa).

Residues 1-22 (MAHKTGQSSSSNGRESKSKRLG) form a disordered region.

The protein belongs to the bacterial ribosomal protein bL27 family.

This Opitutus terrae (strain DSM 11246 / JCM 15787 / PB90-1) protein is Large ribosomal subunit protein bL27.